The following is a 912-amino-acid chain: Effector protein hopAE1 (912 aa).

The segment covering 1–13 has biased composition (polar residues); it reads MMPSQITRSSHSS. Residues 1–32 are disordered; that stretch reads MMPSQITRSSHSSLPEVAPASGDATGVSEQTP.

It belongs to the HopW family.

The protein localises to the secreted. The polypeptide is Effector protein hopAE1 (hopAE1) (Pseudomonas savastanoi pv. phaseolicola (strain 1448A / Race 6) (Pseudomonas syringae pv. phaseolicola (strain 1448A / Race 6))).